A 374-amino-acid polypeptide reads, in one-letter code: Fibrous sheath-interacting protein 1 (374 aa).

Disordered stretches follow at residues 1–80 (MEVY…LEVL), 95–120 (EMTDQTTETSSDHEDSEEENEDPEMR), and 225–244 (EVGQEVTEDRRHTGASHSKS). Composition is skewed to basic and acidic residues over residues 12–28 (PHSRGLEMDAEGSRDKS), 45–55 (DIIKGRLDEIS), and 65–77 (ENRRKSAEGHRSL). Residues 262–290 (SVFLTQQEKERIEDLLKDLEEELLEEPQL) adopt a coiled-coil conformation.

This sequence belongs to the FSIP1 family.

This chain is Fibrous sheath-interacting protein 1 (fsip1), found in Danio rerio (Zebrafish).